Here is a 279-residue protein sequence, read N- to C-terminus: Large ribosomal subunit protein uL2 (279 aa).

2 disordered regions span residues 34-55 (LAPLKKSGGRNRAGRITSRHKG) and 221-279 (RGMA…RKAK). Over residues 40 to 55 (SGGRNRAGRITSRHKG) the composition is skewed to basic residues. Residues 232 to 242 (MGGGEGRSKSG) are compositionally biased toward gly residues. Residues 259–279 (LKTRNKKKASSKLIVRGRKAK) show a composition bias toward basic residues.

This sequence belongs to the universal ribosomal protein uL2 family. As to quaternary structure, part of the 50S ribosomal subunit. Forms a bridge to the 30S subunit in the 70S ribosome.

One of the primary rRNA binding proteins. Required for association of the 30S and 50S subunits to form the 70S ribosome, for tRNA binding and peptide bond formation. It has been suggested to have peptidyltransferase activity; this is somewhat controversial. Makes several contacts with the 16S rRNA in the 70S ribosome. In Chlorobium phaeobacteroides (strain BS1), this protein is Large ribosomal subunit protein uL2.